A 399-amino-acid chain; its full sequence is Phosphoglycerate kinase (399 aa).

Residues 21–23, Arg36, 59–62, Arg120, and Arg158 each bind substrate; these read DFN and HLGR. Residues Lys209, Gly297, Glu328, and 355–358 contribute to the ATP site; that span reads GGDS.

It belongs to the phosphoglycerate kinase family. In terms of assembly, monomer.

Its subcellular location is the cytoplasm. The catalysed reaction is (2R)-3-phosphoglycerate + ATP = (2R)-3-phospho-glyceroyl phosphate + ADP. It participates in carbohydrate degradation; glycolysis; pyruvate from D-glyceraldehyde 3-phosphate: step 2/5. The chain is Phosphoglycerate kinase from Streptococcus suis (strain 05ZYH33).